We begin with the raw amino-acid sequence, 584 residues long: Keratin, type I cytoskeletal 10 (584 aa).

Low complexity predominate over residues Met1–Arg15. The tract at residues Met1–Gly24 is disordered. The head stretch occupies residues Met1–Asn145. Residues Ser14, Ser16, Ser42, Ser53, Ser56, and Ser170 each carry the phosphoserine modification. A coil 1A region spans residues Glu146–Trp181. Residues Glu146–Gly460 enclose the IF rod domain. The interval Tyr182–Thr202 is linker 1. Positions Ile203–Leu294 are coil 1B. The tract at residues Arg295–Leu317 is linker 12. The interval Leu318–Glu456 is coil 2. The tract at residues Leu453–Tyr584 is disordered. Residues Gly457–Ser563 show a composition bias toward gly residues. A tail region spans residues Gly457 to Tyr584. Residues Gly564–Tyr584 show a composition bias toward low complexity.

The protein belongs to the intermediate filament family. In terms of assembly, heterotetramer of two type I and two type II keratins. Heterodimer with KRT1. Two heterodimers of KRT1 and KRT10 form a heterotetramer. The KRT10 subunit in the heterotetramer is probably disulfide-linked. Interacts with PLEC isoform 1C, when in a heterodimer with KRT1. (Microbial infection) Interacts (via C-terminal tail domain) with the S.aureus clumping factor, clfB; this interaction probably mediates S.aureus attachment to the keratinized squamous epithelial cells from the nasal cavity. As to quaternary structure, (Microbial infection) Interacts (via the C-terminal tail domain) with S.pneumoniae serine-rich repeat protein PsrP; this interaction probably mediates S.pneumoniae adherence to lung tissue and subsequent pathogenesis. Neither protein has to be glycosylated for the interaction to occur. In terms of tissue distribution, seen in all suprabasal cell layers including stratum corneum. Expressed on the surface of lung cell lines. Localized on the surface of desquamated nasal epithelial cells (at protein level).

It localises to the secreted. The protein localises to the extracellular space. Its subcellular location is the cell surface. The protein resides in the cytoplasm. Functionally, plays a role in the establishment of the epidermal barrier on plantar skin. Involved in the maintenance of cell layer development and keratin filament bundles in suprabasal cells of the epithelium. (Microbial infection) Acts as a mediator of S.aureus adherence to desquamated nasal epithelial cells via clfB, and hence may play a role in nasal colonization. Its function is as follows. (Microbial infection) Binds S.pneumoniae PsrP, mediating adherence of the bacteria to lung cell lines. Reduction of levels of KRT10 keratin decrease adherence, overexpression increases adherence. Neither protein has to be glycosylated for the interaction to occur. This Homo sapiens (Human) protein is Keratin, type I cytoskeletal 10 (KRT10).